The sequence spans 201 residues: Small ribosomal subunit protein uS4c (201 aa).

Positions 89–149 (MRLDNILFRL…DKPKSGALIK (61 aa)) constitute an S4 RNA-binding domain.

The protein belongs to the universal ribosomal protein uS4 family. As to quaternary structure, part of the 30S ribosomal subunit. Contacts protein S5. The interaction surface between S4 and S5 is involved in control of translational fidelity.

It localises to the plastid. In terms of biological role, one of the primary rRNA binding proteins, it binds directly to 16S rRNA where it nucleates assembly of the body of the 30S subunit. With S5 and S12 plays an important role in translational accuracy. This is Small ribosomal subunit protein uS4c (rps4) from Cuscuta exaltata (Tall dodder).